The following is a 428-amino-acid chain: Trigger factor (428 aa).

Residues 166–250 (GDIVTFDFKG…IKNIKEKILP (85 aa)) form the PPIase FKBP-type domain.

This sequence belongs to the FKBP-type PPIase family. Tig subfamily.

The protein resides in the cytoplasm. The catalysed reaction is [protein]-peptidylproline (omega=180) = [protein]-peptidylproline (omega=0). Functionally, involved in protein export. Acts as a chaperone by maintaining the newly synthesized protein in an open conformation. Functions as a peptidyl-prolyl cis-trans isomerase. In Mycoplasma mycoides subsp. mycoides SC (strain CCUG 32753 / NCTC 10114 / PG1), this protein is Trigger factor.